Consider the following 475-residue polypeptide: Ribulose bisphosphate carboxylase large chain (475 aa).

Residues 1–2 (MS) constitute a propeptide that is removed on maturation. Pro-3 is modified (N-acetylproline). Lys-14 bears the N6,N6,N6-trimethyllysine mark. Substrate contacts are provided by Asn-123 and Thr-173. The active-site Proton acceptor is the Lys-175. Residue Lys-177 participates in substrate binding. Residues Lys-201, Asp-203, and Glu-204 each coordinate Mg(2+). N6-carboxylysine is present on Lys-201. The Proton acceptor role is filled by His-294. The substrate site is built by His-327 and Ser-379.

It belongs to the RuBisCO large chain family. Type I subfamily. In terms of assembly, heterohexadecamer of 8 large chains and 8 small chains; disulfide-linked. The disulfide link is formed within the large subunit homodimers. The cofactor is Mg(2+). In terms of processing, the disulfide bond which can form in the large chain dimeric partners within the hexadecamer appears to be associated with oxidative stress and protein turnover.

Its subcellular location is the plastid. It localises to the chloroplast. It carries out the reaction 2 (2R)-3-phosphoglycerate + 2 H(+) = D-ribulose 1,5-bisphosphate + CO2 + H2O. The catalysed reaction is D-ribulose 1,5-bisphosphate + O2 = 2-phosphoglycolate + (2R)-3-phosphoglycerate + 2 H(+). RuBisCO catalyzes two reactions: the carboxylation of D-ribulose 1,5-bisphosphate, the primary event in carbon dioxide fixation, as well as the oxidative fragmentation of the pentose substrate in the photorespiration process. Both reactions occur simultaneously and in competition at the same active site. This is Ribulose bisphosphate carboxylase large chain from Amaranthus hypochondriacus (Prince-of-Wales feather).